The sequence spans 195 residues: NADH dehydrogenase [ubiquinone] iron-sulfur protein 3 (195 aa).

Belongs to the complex I 30 kDa subunit family. Complex I is composed of about 45 different subunits. This is a component of the iron-sulfur (IP) fragment of the enzyme.

Its subcellular location is the mitochondrion inner membrane. The catalysed reaction is a ubiquinone + NADH + 5 H(+)(in) = a ubiquinol + NAD(+) + 4 H(+)(out). Core subunit of the mitochondrial membrane respiratory chain NADH dehydrogenase (Complex I) that is believed to belong to the minimal assembly required for catalysis. Complex I functions in the transfer of electrons from NADH to the respiratory chain. The immediate electron acceptor for the enzyme is believed to be ubiquinone. This is NADH dehydrogenase [ubiquinone] iron-sulfur protein 3 (NAD9) from Marchantia polymorpha (Common liverwort).